The primary structure comprises 756 residues: Catalase-peroxidase (756 aa).

Positions 91 to 244 form a cross-link, tryptophyl-tyrosyl-methioninium (Trp-Tyr) (with M-270); that stretch reads WHSAGTYRTG…LAAVQMGLIY (154 aa). The active-site Proton acceptor is His-92. Residues 198–230 are disordered; that stretch reads AQKKMQQPGDGTLVAEPENHANEESRTASGERN. Basic and acidic residues predominate over residues 214-223; the sequence is PENHANEESR. A cross-link (tryptophyl-tyrosyl-methioninium (Tyr-Met) (with W-91)) is located at residues 244-270; it reads YVNPEGPEGVPDPVASARDIRETFGRM. His-285 contacts heme b.

It belongs to the peroxidase family. Peroxidase/catalase subfamily. As to quaternary structure, homodimer or homotetramer. Heme b is required as a cofactor. Formation of the three residue Trp-Tyr-Met cross-link is important for the catalase, but not the peroxidase activity of the enzyme.

It catalyses the reaction H2O2 + AH2 = A + 2 H2O. It carries out the reaction 2 H2O2 = O2 + 2 H2O. Bifunctional enzyme with both catalase and broad-spectrum peroxidase activity. This Pseudomonas syringae pv. syringae (strain B728a) protein is Catalase-peroxidase.